Reading from the N-terminus, the 144-residue chain is Glycine-rich protein DC9.1 (144 aa).

A helical transmembrane segment spans residues 5 to 25 (IFLLLGLSIAFAILISSEVAA). Repeat copies occupy residues 37-42 (GYNNGG), 43-48 (GYHNGG), 50-55 (GYNNGG), 56-61 (GYHNGG), 63-68 (GYNNGG), 69-74 (GYHNGG), 76-81 (GYNNGG), 82-87 (GYHNGG), 89-94 (GYNNGG), 102-107 (GYNNGG), and 108-113 (GHHGGG). The 11 X 6 AA tandem repeats of G-Y-[NH]-N-G -G stretch occupies residues 37–113 (GYNNGGGYHN…NNGGGHHGGG (77 aa)).

The protein belongs to the GRP family.

It localises to the membrane. The chain is Glycine-rich protein DC9.1 from Daucus carota (Wild carrot).